The sequence spans 174 residues: Regenerating islet-derived protein 3-alpha (174 aa).

Residues 1 to 25 (MLPRLSFNNVSWTLLYYLFIFQVRG) form the signal peptide. The propeptide occupies 26–36 (EDSQKAVPSTR). Intrachain disulfides connect Cys-39/Cys-50, Cys-67/Cys-170, and Cys-145/Cys-162. A C-type lectin domain is found at 46-171 (YRSYCYTLVT…CDVELPFVCK (126 aa)). A sufficient to activate EXTL3 region spans residues 102 to 117 (WIWLHDPTMGQQPNGG). The Zn(2+) site is built by His-106 and Glu-120.

In terms of assembly, forms a hexameric membrane-permeabilizing oligomeric pore on membrane phospholipids. The hexamer is formed by three dimers related by helical symmetry. Forms filaments, filamentation traps pore complexes and limits damage to host cells. Interacts with EXTL3. Proteolytic processing by trypsin removes an inhibitory N-terminal propeptide and is essential for peptidoglycan binding and antibacterial activity. In terms of tissue distribution, low expression found in healthy pancreas.

Its subcellular location is the secreted. Bactericidal C-type lectin. The lack of the EPN motif may explain its inability to bind peptidoglycan. Its function is as follows. Acts as a hormone in response to different stimuli like anti-inflammatory signals, such as IL17A, or gut microbiome. Secreted by different cell types to activate its receptor EXTL3 and induce cell specific signaling pathways. Induced by IL17A in keratinocytes, regulates keratinocyte proliferation and differentiation after skin injury via activation of EXTL3-PI3K-AKT signaling pathway. In parallel, inhibits skin inflammation through the inhibition of inflammatory cytokines such as IL6 and TNF. In pancreas, is able to permealize beta-cells membrane and stimulate their proliferation. This is Regenerating islet-derived protein 3-alpha (Reg3a) from Rattus norvegicus (Rat).